The primary structure comprises 458 residues: Glutamyl-tRNA reductase (458 aa).

Substrate-binding positions include 49-52 (TCNR), S111, 116-118 (ETE), and Q122. The active-site Nucleophile is the C50. 191–196 (GAGKMS) lines the NADP(+) pocket. Composition is skewed to basic and acidic residues over residues 426-440 (IPKD…KEVE) and 448-458 (ERGHHESDFHN). Residues 426 to 458 (IPKDGEEHSSSKEVESVTQSSTERGHHESDFHN) form a disordered region.

The protein belongs to the glutamyl-tRNA reductase family. In terms of assembly, homodimer.

It carries out the reaction (S)-4-amino-5-oxopentanoate + tRNA(Glu) + NADP(+) = L-glutamyl-tRNA(Glu) + NADPH + H(+). It functions in the pathway porphyrin-containing compound metabolism; protoporphyrin-IX biosynthesis; 5-aminolevulinate from L-glutamyl-tRNA(Glu): step 1/2. Catalyzes the NADPH-dependent reduction of glutamyl-tRNA(Glu) to glutamate 1-semialdehyde (GSA). This is Glutamyl-tRNA reductase from Natranaerobius thermophilus (strain ATCC BAA-1301 / DSM 18059 / JW/NM-WN-LF).